The sequence spans 387 residues: Galactokinase (387 aa).

Residue 36–39 (EHTD) participates in substrate binding. ATP-binding positions include Ser-70 and 125–131 (GAGLSSS). The Mg(2+) site is built by Ser-131 and Glu-163. Residue Asp-175 is the Proton acceptor of the active site. Tyr-227 serves as a coordination point for substrate.

Belongs to the GHMP kinase family. GalK subfamily.

The protein resides in the cytoplasm. The catalysed reaction is alpha-D-galactose + ATP = alpha-D-galactose 1-phosphate + ADP + H(+). It participates in carbohydrate metabolism; galactose metabolism. Its function is as follows. Catalyzes the transfer of the gamma-phosphate of ATP to D-galactose to form alpha-D-galactose-1-phosphate (Gal-1-P). The protein is Galactokinase of Streptomyces coelicolor (strain ATCC BAA-471 / A3(2) / M145).